We begin with the raw amino-acid sequence, 141 residues long: MRVLAIDWGEKYIGLAISDPLRIIAQGLDVWEIKDEEDFVNRLKKLIKEYNVSEIVLGYPISLRGHENEKTKKIEYVAERIKTVVNLPIKFVDERFTTMEAERVLLEGDIKRRDRKLLKNKQAAVIILQKYLDSLSLDTKI.

The protein belongs to the YqgF nuclease family.

The protein resides in the cytoplasm. Its function is as follows. Could be a nuclease involved in processing of the 5'-end of pre-16S rRNA. The protein is Putative pre-16S rRNA nuclease of Dictyoglomus turgidum (strain DSM 6724 / Z-1310).